Here is a 198-residue protein sequence, read N- to C-terminus: Glycerol-3-phosphate acyltransferase 2 (198 aa).

The next 4 membrane-spanning stretches (helical) occupy residues 4–24, 71–91, 113–133, and 147–167; these read TYLLFIVAYLLGSIPFALVVG, LPMVFGLDIHPLWFGLAAVLG, LLCYSPVVFAILAVVFFTLLF, and VVAVIASIVSGDKIFIIAMCL.

The protein belongs to the PlsY family. As to quaternary structure, probably interacts with PlsX.

The protein localises to the cell membrane. It catalyses the reaction an acyl phosphate + sn-glycerol 3-phosphate = a 1-acyl-sn-glycero-3-phosphate + phosphate. It participates in lipid metabolism; phospholipid metabolism. Catalyzes the transfer of an acyl group from acyl-phosphate (acyl-PO(4)) to glycerol-3-phosphate (G3P) to form lysophosphatidic acid (LPA). This enzyme utilizes acyl-phosphate as fatty acyl donor, but not acyl-CoA or acyl-ACP. This Bacillus cereus (strain ZK / E33L) protein is Glycerol-3-phosphate acyltransferase 2.